Here is a 327-residue protein sequence, read N- to C-terminus: Tetraspanin-4 (327 aa).

The Cytoplasmic segment spans residues 1 to 6 (MRSRSN). A helical transmembrane segment spans residues 7-27 (LIGLINFFTFLLSIPILGGGI). Over 28 to 43 (WLSSRANSTDCLRFLQ) the chain is Extracellular. N-linked (GlcNAc...) asparagine glycosylation occurs at Asn-34. Residues 44-64 (WPLIIIGISIMVISLAGIAGA) traverse the membrane as a helical segment. Over 65-75 (CYQNKFLMWLY) the chain is Cytoplasmic. A helical membrane pass occupies residues 76-96 (LFTMFFVIAALIGFTIFAYVV). The Extracellular portion of the chain corresponds to 97–235 (TDKGSGRFVM…LGSLKKSWRK (139 aa)). Residue Asn-187 is glycosylated (N-linked (GlcNAc...) asparagine). Residues 236–256 (VSVINIVVVIILVIFYVIACA) traverse the membrane as a helical segment. Residues 257-287 (AYQNVKRMYNDEPVGEARMTNLILVIFKFKE) are Cytoplasmic-facing. Residues 288-308 (ILVQFFFGIVFLLLFNGLMVC) form a helical membrane-spanning segment. The Extracellular segment spans residues 309-327 (CCNDKFAFSVFFFGYVTYA).

This sequence belongs to the tetraspanin (TM4SF) family.

The protein resides in the membrane. May be involved in the regulation of cell differentiation. This chain is Tetraspanin-4 (TET4), found in Arabidopsis thaliana (Mouse-ear cress).